The primary structure comprises 431 residues: Serine/threonine-protein kinase Sgk1 (431 aa).

Residues 1–60 (MTVKTEAAKGTLTYSRMRGMVAILIAFMKQRRMGLNDFIQKIANNSYACKHPEVQSILKI) form a necessary for localization to the mitochondria region. The segment at 66–92 (PELMNANPSPPPSPSQQINLGPSSNPH) is disordered. Ser74 carries the post-translational modification Phosphoserine. Ser78 carries the phosphoserine; by MAPK7 modification. Positions 81–91 (QQINLGPSSNP) are enriched in polar residues. Residues 98–355 (FHFLKVIGKG…FMEIKSHVFF (258 aa)) enclose the Protein kinase domain. ATP contacts are provided by residues 104-112 (IGKGSFGKV) and Lys127. A Nuclear localization signal motif is present at residues 131–141 (KKAILKKKEEK). Asp222 (proton acceptor) is an active-site residue. A Phosphothreonine; by PDPK1 modification is found at Thr256. An AGC-kinase C-terminal domain is found at 356–431 (SLINWDDLIN…SYAPPTDSFL (76 aa)). Thr369 carries the phosphothreonine; by PKA modification. Residues Ser397, Ser401, and Ser422 each carry the phosphoserine modification.

The protein belongs to the protein kinase superfamily. AGC Ser/Thr protein kinase family. In terms of assembly, homodimer; disulfide-linked. Forms a trimeric complex with FBXW7 and NOTCH1. Interacts with MAPK3/ERK1, MAPK1/ERK2, MAP2K1/MEK1, MAP2K2/MEK2, NEDD4, NEDD4L, MAPT/TAU, MAPK7, CREB1, SLC9A3R2/NHERF2 and KCNJ1/ROMK1. Associates with the mammalian target of rapamycin complex 2 (mTORC2) via an interaction with MAPKAP1/SIN1. Regulated by phosphorylation. Activated by phosphorylation on Ser-422 by mTORC2, transforming it into a substrate for PDPK1 which phosphorylates it on Thr-256. Phosphorylation on Ser-397 and Ser-401 are also essential for its activity. Phosphorylation on Ser-78 by MAPK7 is required for growth factor-induced cell cycle progression. In terms of processing, ubiquitinated by NEDD4L; which promotes proteasomal degradation. Ubiquitinated by SYVN1 at the endoplasmic reticulum; which promotes rapid proteasomal degradation and maintains a high turnover rate in resting cells.

The protein resides in the cytoplasm. It is found in the nucleus. The protein localises to the endoplasmic reticulum membrane. Its subcellular location is the cell membrane. It localises to the mitochondrion. It catalyses the reaction L-seryl-[protein] + ATP = O-phospho-L-seryl-[protein] + ADP + H(+). The catalysed reaction is L-threonyl-[protein] + ATP = O-phospho-L-threonyl-[protein] + ADP + H(+). With respect to regulation, two specific sites, one in the kinase domain (Thr-256) and the other in the C-terminal regulatory region (Ser-422), need to be phosphorylated for its full activation. Phosphorylation at Ser-397 and Ser-401 are also essential for its activity. Activated by WNK1, WNK2, WNK3 and WNK4; which promote phosphorylation by mTORC2. Serine/threonine-protein kinase which is involved in the regulation of a wide variety of ion channels, membrane transporters, cellular enzymes, transcription factors, neuronal excitability, cell growth, proliferation, survival, migration and apoptosis. Plays an important role in cellular stress response. Contributes to regulation of renal Na(+) retention, renal K(+) elimination, salt appetite, gastric acid secretion, intestinal Na(+)/H(+) exchange and nutrient transport, insulin-dependent salt sensitivity of blood pressure, salt sensitivity of peripheral glucose uptake, cardiac repolarization and memory consolidation. Up-regulates Na(+) channels: SCNN1A/ENAC, SCN5A and ASIC1/ACCN2, K(+) channels: KCNJ1/ROMK1, KCNA1-5, KCNQ1-5 and KCNE1, epithelial Ca(2+) channels: TRPV5 and TRPV6, chloride channels: BSND, CLCN2 and CFTR, glutamate transporters: SLC1A3/EAAT1, SLC1A2 /EAAT2, SLC1A1/EAAT3, SLC1A6/EAAT4 and SLC1A7/EAAT5, amino acid transporters: SLC1A5/ASCT2, SLC38A1/SN1 and SLC6A19, creatine transporter: SLC6A8, Na(+)/dicarboxylate cotransporter: SLC13A2/NADC1, Na(+)-dependent phosphate cotransporter: SLC34A2/NAPI-2B, glutamate receptor: GRIK2/GLUR6. Up-regulates carriers: SLC9A3/NHE3, SLC12A1/NKCC2, SLC12A3/NCC, SLC5A3/SMIT, SLC2A1/GLUT1, SLC5A1/SGLT1 and SLC15A2/PEPT2. Regulates enzymes: GSK3A/B, PMM2 and Na(+)/K(+) ATPase, and transcription factors: CTNNB1 and nuclear factor NF-kappa-B. Stimulates sodium transport into epithelial cells by enhancing the stability and expression of SCNN1A/ENAC. This is achieved by phosphorylating the NEDD4L ubiquitin E3 ligase, promoting its interaction with 14-3-3 proteins, thereby preventing it from binding to SCNN1A/ENAC and targeting it for degradation. Regulates store-operated Ca(+2) entry (SOCE) by stimulating ORAI1 and STIM1. Regulates KCNJ1/ROMK1 directly via its phosphorylation or indirectly via increased interaction with SLC9A3R2/NHERF2. Phosphorylates MDM2 and activates MDM2-dependent ubiquitination of p53/TP53. Phosphorylates MAPT/TAU and mediates microtubule depolymerization and neurite formation in hippocampal neurons. Phosphorylates SLC2A4/GLUT4 and up-regulates its activity. Phosphorylates APBB1/FE65 and promotes its localization to the nucleus. Phosphorylates MAPK1/ERK2 and activates it by enhancing its interaction with MAP2K1/MEK1 and MAP2K2/MEK2. Phosphorylates FBXW7 and plays an inhibitory role in the NOTCH1 signaling. Phosphorylates FOXO1 resulting in its relocalization from the nucleus to the cytoplasm. Phosphorylates FOXO3, promoting its exit from the nucleus and interference with FOXO3-dependent transcription. Phosphorylates BRAF and MAP3K3/MEKK3 and inhibits their activity. Phosphorylates SLC9A3/NHE3 in response to dexamethasone, resulting in its activation and increased localization at the cell membrane. Phosphorylates CREB1. Necessary for vascular remodeling during angiogenesis. This Macaca fascicularis (Crab-eating macaque) protein is Serine/threonine-protein kinase Sgk1 (SGK1).